Consider the following 419-residue polypeptide: ATP phosphoribosyltransferase regulatory subunit (419 aa).

Belongs to the class-II aminoacyl-tRNA synthetase family. HisZ subfamily. As to quaternary structure, heteromultimer composed of HisG and HisZ subunits.

It is found in the cytoplasm. It functions in the pathway amino-acid biosynthesis; L-histidine biosynthesis; L-histidine from 5-phospho-alpha-D-ribose 1-diphosphate: step 1/9. Functionally, required for the first step of histidine biosynthesis. May allow the feedback regulation of ATP phosphoribosyltransferase activity by histidine. This chain is ATP phosphoribosyltransferase regulatory subunit, found in Ruminiclostridium cellulolyticum (strain ATCC 35319 / DSM 5812 / JCM 6584 / H10) (Clostridium cellulolyticum).